The following is a 585-amino-acid chain: A-type ATP synthase subunit A (585 aa).

231–238 contributes to the ATP binding site; sequence GPFGSGKT.

It belongs to the ATPase alpha/beta chains family. In terms of assembly, has multiple subunits with at least A(3), B(3), C, D, E, F, H, I and proteolipid K(x).

Its subcellular location is the cell membrane. The enzyme catalyses ATP + H2O + 4 H(+)(in) = ADP + phosphate + 5 H(+)(out). Component of the A-type ATP synthase that produces ATP from ADP in the presence of a proton gradient across the membrane. The A chain is the catalytic subunit. This Thermococcus gammatolerans (strain DSM 15229 / JCM 11827 / EJ3) protein is A-type ATP synthase subunit A.